The chain runs to 299 residues: Putative adenosine/adenine deaminase (299 aa).

2 residues coordinate Zn(2+): histidine 16 and histidine 18. Histidine 18 and glycine 157 together coordinate substrate. Residue histidine 184 coordinates Zn(2+). Glutamate 187 (proton donor) is an active-site residue. Residue aspartate 265 participates in Zn(2+) binding. Aspartate 266 is a binding site for substrate.

It belongs to the metallo-dependent hydrolases superfamily. Adenosine and AMP deaminases family. Requires Zn(2+) as cofactor.

In terms of biological role, putative nucleoside deaminase. May catalyze the hydrolytic deamination of adenosine or some similar substrate and play a role in purine metabolism. This Treponema pallidum (strain Nichols) protein is Putative adenosine/adenine deaminase.